Consider the following 422-residue polypeptide: MHIHKIQAREILDSRGNPTIEADVILTTGIIGRASVPSGASTGSREACELRDNDPKRYAGKGVQKAVKHVNNEINQALQGLSVEDQENLDRILCQLDNTENKSHLGANAILATSLACARARALSLNQPLYMTLNQGDMMTMPVPMMNILNGGAHADNNVDIQEFMIMPIGAPDFPVALQMGTEIFHVLKSVLKKQGLNTAVGDEGGFAPNIQSNRQALDLLSEAIEKAGFRLGEDIVFALDVAASELFNEGFYHMYSENQKFDSHQLIEYYANLISSYPIVSIEDGLDEKDWSGWKQLTTHLGNKVQLVGDDLFVTNPKILREGIAQGVANAILIKVNQIGTLSETRQAIKLAYDNGYRCVMSHRSGETEDTFIADLAVASGCGQIKTGSLCRTDRTAKYNQLLRINELASLPYAGKNILKR.

Glutamine 162 is a binding site for (2R)-2-phosphoglycerate. Glutamate 204 functions as the Proton donor in the catalytic mechanism. Aspartate 241, glutamate 284, and aspartate 311 together coordinate Mg(2+). 4 residues coordinate (2R)-2-phosphoglycerate: lysine 336, arginine 365, serine 366, and lysine 387. Catalysis depends on lysine 336, which acts as the Proton acceptor.

It belongs to the enolase family. Component of the RNA degradosome, a multiprotein complex involved in RNA processing and mRNA degradation. Mg(2+) is required as a cofactor.

It localises to the cytoplasm. It is found in the secreted. Its subcellular location is the cell surface. The catalysed reaction is (2R)-2-phosphoglycerate = phosphoenolpyruvate + H2O. It functions in the pathway carbohydrate degradation; glycolysis; pyruvate from D-glyceraldehyde 3-phosphate: step 4/5. Functionally, catalyzes the reversible conversion of 2-phosphoglycerate (2-PG) into phosphoenolpyruvate (PEP). It is essential for the degradation of carbohydrates via glycolysis. This is Enolase from Legionella pneumophila (strain Corby).